The following is a 623-amino-acid chain: DEAD-box ATP-dependent RNA helicase 52C (623 aa).

The interval 1 to 120 (MATPSRTSWA…DGDAAAGAGD (120 aa)) is disordered. The span at 10–29 (ADVADADPAPAPAPAANGPA) shows a compositional bias: low complexity. Positions 54–69 (APPPSSSSSSAPPPRA) are enriched in pro residues. Residues 70–83 (APGLLAPRPAAAGM) show a composition bias toward low complexity. The segment covering 84–97 (GRMGGGGGGGGFGG) has biased composition (gly residues). Positions 155 to 183 (GTFAEIDLGQALNDNIRRCKYVRPTPVQR) match the Q motif motif. Residues 186–372 (IPISLAGRDL…SDFLENYIFL (187 aa)) form the Helicase ATP-binding domain. ATP is bound at residue 199 to 206 (AQTGSGKT). The short motif at 316 to 319 (DEAD) is the DEAD box element. Positions 399–550 (HLMDLLHAQR…EVPAWLSRYA (152 aa)) constitute a Helicase C-terminal domain. Positions 553 to 595 (PSYGGGGGRNRRSGGGSRFGGRDFRRDSSSGRGGGDYYGGGSS) are disordered. Residues 555 to 571 (YGGGGGRNRRSGGGSRF) show a composition bias toward gly residues. A compositionally biased stretch (basic and acidic residues) spans 572–581 (GGRDFRRDSS). Gly residues predominate over residues 583–595 (GRGGGDYYGGGSS).

Belongs to the DEAD box helicase family. DDX3/DED1 subfamily.

The enzyme catalyses ATP + H2O = ADP + phosphate + H(+). This chain is DEAD-box ATP-dependent RNA helicase 52C, found in Oryza sativa subsp. japonica (Rice).